The sequence spans 312 residues: D-apiose import binding protein (312 aa).

A signal peptide spans 1-26; the sequence is MKASKRWVALAAATLTLFTATGTAQA. D-apiofuranose is bound by residues N39, 115-116, 162-164, R168, N218, D243, and Q263; these read DR and DIN.

The protein belongs to the bacterial solute-binding protein 2 family.

The protein localises to the periplasm. In terms of biological role, part of an ABC transporter complex involved in D-apiose import. Binds D-apiose, D-ribose and D-ribulose. The protein is D-apiose import binding protein of Paraburkholderia graminis (strain ATCC 700544 / DSM 17151 / LMG 18924 / NCIMB 13744 / C4D1M).